Reading from the N-terminus, the 623-residue chain is Calnexin (623 aa).

A signal peptide spans 1 to 21; that stretch reads MLNRKWSFVFLTFLLVISVNA. Asp-108 contributes to the Ca(2+) binding site. Cys-151 and Cys-185 are disulfide-bonded. An alpha-D-glucoside contacts are provided by Tyr-155, Lys-157, Tyr-176, and Asp-183. Asn-202 carries N-linked (GlcNAc...) asparagine glycosylation. The interval 260 to 337 is disordered; the sequence is SLTPPKEIFD…QKPQDWDEDM (78 aa). The span at 266-276 shows a compositional bias: basic and acidic residues; that stretch reads EIFDETDLKPE. Residues 267–400 are p domain (Extended arm); that stretch reads IFDETDLKPE…RLIDNPNYFE (134 aa). Tandem repeats lie at residues 269 to 281, 286 to 298, 305 to 317, 324 to 336, and 339 to 349. 4 X approximate repeats stretches follow at residues 269–336 and 339–396; these read DETD…WDED and GSWE…IDNP. Acidic residues-rich tracts occupy residues 277–287 and 314–323; these read DWDEREQIEDE and WNEEENELIP. A disulfide bridge links Cys-351 with Cys-357. 3 consecutive repeat copies span residues 358 to 368, 372 to 382, and 386 to 396. Residue Glu-416 coordinates an alpha-D-glucoside. Asp-427 is a Ca(2+) binding site. Residues 480 to 500 traverse the membrane as a helical segment; that stretch reads LWAVYILCILLPLIAIGVFCF. The interval 536–623 is disordered; sequence IAEDEEDNQP…AKRRTARRGD (88 aa). Acidic residues predominate over residues 556–565; the sequence is IDEDEQDEVE. Residues 566 to 581 are compositionally biased toward low complexity; that stretch reads QQPSSSKTASSESSSA. Positions 614-623 are enriched in basic residues; that stretch reads AKRRTARRGD.

It belongs to the calreticulin family. Glycosylation is important for its biological activity.

The protein resides in the endoplasmic reticulum membrane. It is found in the cytoplasm. Its subcellular location is the perinuclear region. The protein localises to the cytoplasmic vesicle. Functionally, calcium-binding protein that interacts with newly synthesized monoglucosylated glycoproteins in the endoplasmic reticulum. It may act in assisting protein assembly and/or in the retention within the ER of unassembled protein subunits. It seems to play a major role in the quality control apparatus of the ER by the retention of incorrectly folded proteins. Required for embryogenesis and larval development under heat and ER stress conditions. May be important for germ cell development. Involved in neuronal necrotic cell death. The polypeptide is Calnexin (Caenorhabditis briggsae).